Reading from the N-terminus, the 463-residue chain is MKKILVIGDLIADYYLWGKSERLSPEAPVPVLEVKKESKNLGGAANVANNLTSLKAKVFLCGVVGDDLEGKHFISTLKTRGIDTSGVLIDKTRCTTLKTRIIAQNQQIVRVDKEIKDPLNADLRKNLLDFIAEKIQEIDGVILSDYNKGVLDFELTQTIITLANKHHKLILCDPKGKDYSKYSHASLITPNRAELEQALHLKLDSHANLSKALQILQETYHIAMPLVTLSEQGIAFLEKGELVNCPTIAKEVYDVTGAGDTVIASLTLSLLESKSLKEACEFANAAAAVVVGKMGSALASLEEIALILNQTHPKILPLEKLLETLERNQQKIVFTNGCFDILHKGHASYLQKAKALGDILVVGLNSDNSIKRLKGDKRPIVSEKDRAFLLASLSCVDYVVVFGEDTPIKLIQALKPDILVKGADYLNKEVIGSELAKETRLIEFEEGYSTSAIIEKIKRTHND.

Positions 1 to 315 (MKKILVIGDL…LILNQTHPKI (315 aa)) are ribokinase. 191–194 (NRAE) lines the ATP pocket. D260 is an active-site residue. The cytidylyltransferase stretch occupies residues 334–463 (FTNGCFDILH…IEKIKRTHND (130 aa)).

It in the N-terminal section; belongs to the carbohydrate kinase PfkB family. This sequence in the C-terminal section; belongs to the cytidylyltransferase family. Homodimer.

It carries out the reaction D-glycero-beta-D-manno-heptose 7-phosphate + ATP = D-glycero-beta-D-manno-heptose 1,7-bisphosphate + ADP + H(+). The enzyme catalyses D-glycero-beta-D-manno-heptose 1-phosphate + ATP + H(+) = ADP-D-glycero-beta-D-manno-heptose + diphosphate. It participates in nucleotide-sugar biosynthesis; ADP-L-glycero-beta-D-manno-heptose biosynthesis; ADP-L-glycero-beta-D-manno-heptose from D-glycero-beta-D-manno-heptose 7-phosphate: step 1/4. It functions in the pathway nucleotide-sugar biosynthesis; ADP-L-glycero-beta-D-manno-heptose biosynthesis; ADP-L-glycero-beta-D-manno-heptose from D-glycero-beta-D-manno-heptose 7-phosphate: step 3/4. Its pathway is bacterial outer membrane biogenesis; LPS core biosynthesis. Catalyzes the phosphorylation of D-glycero-D-manno-heptose 7-phosphate at the C-1 position to selectively form D-glycero-beta-D-manno-heptose-1,7-bisphosphate. In terms of biological role, catalyzes the ADP transfer from ATP to D-glycero-beta-D-manno-heptose 1-phosphate, yielding ADP-D-glycero-beta-D-manno-heptose. In Helicobacter pylori (strain J99 / ATCC 700824) (Campylobacter pylori J99), this protein is Bifunctional protein HldE.